A 447-amino-acid chain; its full sequence is Argininosuccinate synthase (447 aa).

Residues 17-25 and alanine 43 each bind ATP; that span reads AFSGGLDTS. Tyrosine 99 contacts L-citrulline. Residues glycine 129 and threonine 131 each contribute to the ATP site. Threonine 131, asparagine 135, and aspartate 136 together coordinate L-aspartate. L-citrulline is bound at residue asparagine 135. Aspartate 136 is a binding site for ATP. Positions 139 and 192 each coordinate L-citrulline. Aspartate 194 is a binding site for ATP. Positions 201, 203, and 280 each coordinate L-citrulline.

This sequence belongs to the argininosuccinate synthase family. Type 2 subfamily. Homotetramer.

It is found in the cytoplasm. The enzyme catalyses L-citrulline + L-aspartate + ATP = 2-(N(omega)-L-arginino)succinate + AMP + diphosphate + H(+). The protein operates within amino-acid biosynthesis; L-arginine biosynthesis; L-arginine from L-ornithine and carbamoyl phosphate: step 2/3. The sequence is that of Argininosuccinate synthase from Shigella boydii serotype 18 (strain CDC 3083-94 / BS512).